A 221-amino-acid polypeptide reads, in one-letter code: Large ribosomal subunit protein uL4 (221 aa).

Residues Ala-45–Gln-100 are disordered.

The protein belongs to the universal ribosomal protein uL4 family. Part of the 50S ribosomal subunit.

In terms of biological role, one of the primary rRNA binding proteins, this protein initially binds near the 5'-end of the 23S rRNA. It is important during the early stages of 50S assembly. It makes multiple contacts with different domains of the 23S rRNA in the assembled 50S subunit and ribosome. Its function is as follows. Forms part of the polypeptide exit tunnel. In Leifsonia xyli subsp. xyli (strain CTCB07), this protein is Large ribosomal subunit protein uL4.